A 195-amino-acid polypeptide reads, in one-letter code: Small ribosomal subunit protein bS16 (195 aa).

Residues 171–181 (PEAPVAAAEPA) are compositionally biased toward low complexity. The disordered stretch occupies residues 171 to 195 (PEAPVAAAEPAPEVKAEEKEEGGEA).

Belongs to the bacterial ribosomal protein bS16 family.

The sequence is that of Small ribosomal subunit protein bS16 from Chlorobium luteolum (strain DSM 273 / BCRC 81028 / 2530) (Pelodictyon luteolum).